Here is a 252-residue protein sequence, read N- to C-terminus: Ditrans,polycis-undecaprenyl-diphosphate synthase ((2E,6E)-farnesyl-diphosphate specific) (252 aa).

The active site involves Asp-25. Residue Asp-25 participates in Mg(2+) binding. Residues 26–29, Trp-30, Arg-38, His-42, and 70–72 contribute to the substrate site; these read GNGR and SSE. Asn-73 serves as the catalytic Proton acceptor. Residues Trp-74, Arg-76, and Arg-193 each coordinate substrate. Mg(2+) is bound at residue His-198. Position 199-201 (199-201) interacts with substrate; it reads RIS. Glu-212 lines the Mg(2+) pocket.

This sequence belongs to the UPP synthase family. In terms of assembly, homodimer. Mg(2+) serves as cofactor.

It catalyses the reaction 8 isopentenyl diphosphate + (2E,6E)-farnesyl diphosphate = di-trans,octa-cis-undecaprenyl diphosphate + 8 diphosphate. Catalyzes the sequential condensation of isopentenyl diphosphate (IPP) with (2E,6E)-farnesyl diphosphate (E,E-FPP) to yield (2Z,6Z,10Z,14Z,18Z,22Z,26Z,30Z,34E,38E)-undecaprenyl diphosphate (di-trans,octa-cis-UPP). UPP is the precursor of glycosyl carrier lipid in the biosynthesis of bacterial cell wall polysaccharide components such as peptidoglycan and lipopolysaccharide. The chain is Ditrans,polycis-undecaprenyl-diphosphate synthase ((2E,6E)-farnesyl-diphosphate specific) from Salmonella typhi.